Here is a 479-residue protein sequence, read N- to C-terminus: 3-phytase B (479 aa).

The N-terminal stretch at 1–19 (MPRTSLLTLACALATGASA) is a signal peptide. 5 disulfides stabilise this stretch: Cys-71–Cys-387, Cys-128–Cys-472, Cys-216–Cys-441, Cys-225–Cys-298, and Cys-413–Cys-421. His-82 acts as the Nucleophile in catalysis. Asn-191 is a glycosylation site (N-linked (GlcNAc...) asparagine). Residue Asn-315 is glycosylated (N-linked (GlcNAc...) asparagine). Asp-338 acts as the Proton donor in catalysis. N-linked (GlcNAc...) asparagine glycosylation is present at Asn-458.

The protein belongs to the histidine acid phosphatase family. Homodimer.

The catalysed reaction is 1D-myo-inositol hexakisphosphate + H2O = 1D-myo-inositol 1,2,4,5,6-pentakisphosphate + phosphate. Functionally, catalyzes the hydrolysis of inorganic orthophosphate from phytate. The sequence is that of 3-phytase B (phyB) from Aspergillus awamori (Black koji mold).